Reading from the N-terminus, the 539-residue chain is Keratin, type II cytoskeletal 73 (539 aa).

The head stretch occupies residues 1-130 (MNRQFTCKPG…DPEIQKVRAQ (130 aa)). Residues 131-166 (EREQIKALNNKFASFIDKVRFLEQQNQVLQTKWELL) are coil 1A. In terms of domain architecture, IF rod spans 131–444 (EREQIKALNN…KLLEGEECRM (314 aa)). The tract at residues 167–185 (QQLDLSNCRRNLEPVYEAH) is linker 1. Residues 186–277 (ISSLQKQLDS…CLYEGEITQM (92 aa)) form a coil 1B region. The tract at residues 278–301 (QSHISDTSVVLSMDNNRNLDLDSI) is linker 12. The coil 2 stretch occupies residues 302-440 (IAEVRAQYED…ATYRKLLEGE (139 aa)). Residues 441–539 (ECRMSGEHTS…LGSPSKKTMR (99 aa)) are tail.

It belongs to the intermediate filament family. In terms of assembly, heterotetramer of two type I and two type II keratins.

In terms of biological role, has a role in hair formation. Specific component of keratin intermediate filaments in the inner root sheath (IRS) of the hair follicle. The chain is Keratin, type II cytoskeletal 73 (Krt73) from Mus musculus (Mouse).